The primary structure comprises 451 residues: Cyclin-dependent kinase 18 (451 aa).

Phosphoserine occurs at positions 12, 51, 66, 75, and 109. The Protein kinase domain maps to 121-402; the sequence is YVKLDKLGEG…AEAALNHPYF (282 aa). ATP is bound by residues 127–135 and Lys150; that span reads LGEGTYATV. Asp242 (proton acceptor) is an active-site residue. Residues Ser417 and Ser420 each carry the phosphoserine modification.

The protein belongs to the protein kinase superfamily. CMGC Ser/Thr protein kinase family. CDC2/CDKX subfamily. In brain, kidney, intestine and at a much lower level, in fetal tissues.

It carries out the reaction L-seryl-[protein] + ATP = O-phospho-L-seryl-[protein] + ADP + H(+). The catalysed reaction is L-threonyl-[protein] + ATP = O-phospho-L-threonyl-[protein] + ADP + H(+). In terms of biological role, may play a role in signal transduction cascades in terminally differentiated cells. This Mus musculus (Mouse) protein is Cyclin-dependent kinase 18 (Cdk18).